A 342-amino-acid polypeptide reads, in one-letter code: Inositol-tetrakisphosphate 1-kinase 1 (342 aa).

1D-myo-inositol 6-phosphate contacts are provided by lysine 28 and lysine 70. Residues arginine 105 and lysine 155 each coordinate ATP. The ATP-grasp domain occupies 116–332 (DHAADQDSTF…HKDGVGNQQE (217 aa)). The 1D-myo-inositol 6-phosphate site is built by glycine 161 and histidine 166. Positions 166, 187, and 190 each coordinate ATP. 1D-myo-inositol 6-phosphate is bound by residues lysine 198 and tyrosine 200. Residue serine 213 coordinates ATP. Positions 219–247 (PEDDASAQGSVSFSQVSNLPTERTAEEYY) are catalytic specificity elements (CSE). 1D-myo-inositol 6-phosphate is bound at residue asparagine 280. Position 282 (aspartate 282) interacts with Mg(2+). 3 residues coordinate ATP: isoleucine 296, aspartate 297, and asparagine 299. The Mg(2+) site is built by aspartate 297 and asparagine 299. 1D-myo-inositol 6-phosphate is bound by residues asparagine 299, glycine 303, and lysine 306.

This sequence belongs to the ITPK1 family. Monomer. Requires Mg(2+) as cofactor. Expressed in the embryo of 15 day after pollination. Expressed in kernels at earlier stages but at very low levels. Expression in the embryo peaks at 15 days after pollination and then declines. No expression is detected from endosperm and vegetative tissues.

The catalysed reaction is 1D-myo-inositol 3,4,5,6-tetrakisphosphate + ATP = 1D-myo-inositol 1,3,4,5,6-pentakisphosphate + ADP + H(+). It catalyses the reaction 1D-myo-inositol 1,3,4-trisphosphate + ATP = 1D-myo-inositol 1,3,4,5-tetrakisphosphate + ADP + H(+). The enzyme catalyses 1D-myo-inositol 1,3,4-trisphosphate + ATP = 1D-myo-inositol 1,3,4,6-tetrakisphosphate + ADP + H(+). It carries out the reaction 1D-myo-inositol 1,2,3,4,5-pentakisphosphate + ATP = 3-diphospho-1D-myo-inositol 1,2,4,5-tetrakisphosphate + ADP. The catalysed reaction is 1D-myo-inositol hexakisphosphate + ATP = 5-diphospho-1D-myo-inositol 1,2,3,4,6-pentakisphosphate + ADP. Kinase that can phosphorylate various inositol polyphosphate such as Ins(3,4,5,6)P4 or Ins(1,3,4)P3 and participates in phytic acid biosynthesis in developing seeds. Phosphorylates Ins(3,4,5,6)P4 at position 1 to form Ins(1,3,4,5,6)P5. This reaction is thought to have regulatory importance, since Ins(3,4,5,6)P4 is an inhibitor of plasma membrane Ca(2+)-activated Cl(-) channels, while Ins(1,3,4,5,6)P5 is not. Also phosphorylates Ins(1,3,4)P3 on O-5 and O-6 to form Ins(1,3,4,6)P4, an essential molecule in the hexakisphosphate (InsP6) pathway. Also able to phosphorylate Ins(3,5,6)P3 but not Ins(1,4,5)P3, Ins(2,4,5)P3, Ins(1,3,4,6)P4 nor Ins(1,3,5,6)P4. Has higher specific activity on Ins(3,4,5,6)P4 than Ins(1,3,4)P3 and Ins(3,5,6)P3. Can also could use Ins(1,2,5,6)P4 as a substrate. Able to add a beta-phosphate to the 3 positions of Ins(1,2,3,4,5)P5 and to add beta-phosphate to InsP6 to yield 5-InsP7, thus exhibiting InsP6 kinase activity. Also has Ins(1,3,4,5,6)P5 phosphatase activity. In Zea mays (Maize), this protein is Inositol-tetrakisphosphate 1-kinase 1.